The sequence spans 117 residues: Holo-[acyl-carrier-protein] synthase (117 aa).

Asp6 and Glu55 together coordinate Mg(2+).

The protein belongs to the P-Pant transferase superfamily. AcpS family. Mg(2+) serves as cofactor.

It localises to the cytoplasm. The catalysed reaction is apo-[ACP] + CoA = holo-[ACP] + adenosine 3',5'-bisphosphate + H(+). Transfers the 4'-phosphopantetheine moiety from coenzyme A to a Ser of acyl-carrier-protein. The sequence is that of Holo-[acyl-carrier-protein] synthase from Chlorobaculum parvum (strain DSM 263 / NCIMB 8327) (Chlorobium vibrioforme subsp. thiosulfatophilum).